The sequence spans 485 residues: Glutamyl-tRNA(Gln) amidotransferase subunit A (485 aa).

Active-site charge relay system residues include lysine 78 and serine 153. Residue serine 177 is the Acyl-ester intermediate of the active site.

The protein belongs to the amidase family. GatA subfamily. In terms of assembly, heterotrimer of A, B and C subunits.

The enzyme catalyses L-glutamyl-tRNA(Gln) + L-glutamine + ATP + H2O = L-glutaminyl-tRNA(Gln) + L-glutamate + ADP + phosphate + H(+). Its function is as follows. Allows the formation of correctly charged Gln-tRNA(Gln) through the transamidation of misacylated Glu-tRNA(Gln) in organisms which lack glutaminyl-tRNA synthetase. The reaction takes place in the presence of glutamine and ATP through an activated gamma-phospho-Glu-tRNA(Gln). The polypeptide is Glutamyl-tRNA(Gln) amidotransferase subunit A (Bacillus cereus (strain 03BB102)).